A 366-amino-acid chain; its full sequence is Aminomethyltransferase (366 aa).

This sequence belongs to the GcvT family. In terms of assembly, the glycine cleavage system is composed of four proteins: P, T, L and H.

The enzyme catalyses N(6)-[(R)-S(8)-aminomethyldihydrolipoyl]-L-lysyl-[protein] + (6S)-5,6,7,8-tetrahydrofolate = N(6)-[(R)-dihydrolipoyl]-L-lysyl-[protein] + (6R)-5,10-methylene-5,6,7,8-tetrahydrofolate + NH4(+). In terms of biological role, the glycine cleavage system catalyzes the degradation of glycine. The chain is Aminomethyltransferase from Bordetella parapertussis (strain 12822 / ATCC BAA-587 / NCTC 13253).